The chain runs to 292 residues: uncharacterized protein (292 aa).

The helical transmembrane segment at 17 to 37 threads the bilayer; the sequence is SMDMFFFLFIFLLFIYPEMMM.

The protein to M.jannaschii MJ0137.

Its subcellular location is the membrane. This is an uncharacterized protein from Methanocaldococcus jannaschii (strain ATCC 43067 / DSM 2661 / JAL-1 / JCM 10045 / NBRC 100440) (Methanococcus jannaschii).